Here is a 258-residue protein sequence, read N- to C-terminus: MSLIDPRAIIDPSAVLADGVEVGPWSIIGAGVEIGEGTVIGPHVILKGPTRIGKHNRIYQFSSVGEDTPDLKYKGEETRLVIGDHNVIREGVTIHRGTVQDRSETTLGDHNLIMAYAHIGHDSVIGNHCILVNNTALAGHVHVDDWAILSGFTLVHQYCHIGAHSFSGMGTAIGKDVPAFVTVFGNPAEARSMNFEGMRRRGFSEDAIHALRRAYKTVYRQGLTVEQALAELAEPSAQFPEVAMFRDSIQSSTRGITR.

This sequence belongs to the transferase hexapeptide repeat family. LpxA subfamily. In terms of assembly, homotrimer.

It localises to the cytoplasm. It carries out the reaction a (3R)-hydroxyacyl-[ACP] + UDP-N-acetyl-alpha-D-glucosamine = a UDP-3-O-[(3R)-3-hydroxyacyl]-N-acetyl-alpha-D-glucosamine + holo-[ACP]. The protein operates within glycolipid biosynthesis; lipid IV(A) biosynthesis; lipid IV(A) from (3R)-3-hydroxytetradecanoyl-[acyl-carrier-protein] and UDP-N-acetyl-alpha-D-glucosamine: step 1/6. Its function is as follows. Involved in the biosynthesis of lipid A, a phosphorylated glycolipid that anchors the lipopolysaccharide to the outer membrane of the cell. The chain is Acyl-[acyl-carrier-protein]--UDP-N-acetylglucosamine O-acyltransferase from Pseudomonas fluorescens (strain Pf0-1).